The primary structure comprises 259 residues: S-methyl-5'-thioadenosine phosphorylase (259 aa).

Residues S9 and 50–51 contribute to the phosphate site; that span reads RH. Residue M175 participates in substrate binding. Residue T176 coordinates phosphate. A substrate-binding site is contributed by 199–201; it reads DLD.

This sequence belongs to the PNP/MTAP phosphorylase family. MTAP subfamily. As to quaternary structure, homohexamer. Dimer of a homotrimer.

The catalysed reaction is S-methyl-5'-thioadenosine + phosphate = 5-(methylsulfanyl)-alpha-D-ribose 1-phosphate + adenine. The protein operates within amino-acid biosynthesis; L-methionine biosynthesis via salvage pathway; S-methyl-5-thio-alpha-D-ribose 1-phosphate from S-methyl-5'-thioadenosine (phosphorylase route): step 1/1. Functionally, catalyzes the reversible phosphorylation of S-methyl-5'-thioadenosine (MTA) to adenine and 5-methylthioribose-1-phosphate. Involved in the breakdown of MTA, a major by-product of polyamine biosynthesis. Responsible for the first step in the methionine salvage pathway after MTA has been generated from S-adenosylmethionine. Has broad substrate specificity with 6-aminopurine nucleosides as preferred substrates. The polypeptide is S-methyl-5'-thioadenosine phosphorylase (Mycolicibacterium smegmatis (strain ATCC 700084 / mc(2)155) (Mycobacterium smegmatis)).